We begin with the raw amino-acid sequence, 70 residues long: uncharacterized protein (70 aa).

The C2H2-type zinc-finger motif lies at Tyr-21–His-43.

This is an uncharacterized protein from Saccharolobus islandicus (Sulfolobus islandicus).